A 509-amino-acid polypeptide reads, in one-letter code: ATP synthase subunit alpha (509 aa).

169-176 serves as a coordination point for ATP; sequence GDRKTGKT.

This sequence belongs to the ATPase alpha/beta chains family. F-type ATPases have 2 components, CF(1) - the catalytic core - and CF(0) - the membrane proton channel. CF(1) has five subunits: alpha(3), beta(3), gamma(1), delta(1), epsilon(1). CF(0) has three main subunits: a(1), b(2) and c(9-12). The alpha and beta chains form an alternating ring which encloses part of the gamma chain. CF(1) is attached to CF(0) by a central stalk formed by the gamma and epsilon chains, while a peripheral stalk is formed by the delta and b chains.

Its subcellular location is the cell membrane. It carries out the reaction ATP + H2O + 4 H(+)(in) = ADP + phosphate + 5 H(+)(out). In terms of biological role, produces ATP from ADP in the presence of a proton gradient across the membrane. The alpha chain is a regulatory subunit. This chain is ATP synthase subunit alpha, found in Lacticaseibacillus casei (strain BL23) (Lactobacillus casei).